A 709-amino-acid polypeptide reads, in one-letter code: Elongation factor G (709 aa).

Residues 8–297 (ANTRNIGIMA…AVIDYLPSPL (290 aa)) form the tr-type G domain. Residues 17–24 (AHVDAGKT), 81–85 (DTPGH), and 135–138 (NKMD) each bind GTP.

The protein belongs to the TRAFAC class translation factor GTPase superfamily. Classic translation factor GTPase family. EF-G/EF-2 subfamily.

Its subcellular location is the cytoplasm. In terms of biological role, catalyzes the GTP-dependent ribosomal translocation step during translation elongation. During this step, the ribosome changes from the pre-translocational (PRE) to the post-translocational (POST) state as the newly formed A-site-bound peptidyl-tRNA and P-site-bound deacylated tRNA move to the P and E sites, respectively. Catalyzes the coordinated movement of the two tRNA molecules, the mRNA and conformational changes in the ribosome. This is Elongation factor G from Lactococcus lactis subsp. cremoris (strain MG1363).